Here is a 489-residue protein sequence, read N- to C-terminus: MEARVISCTTFGDNKVVKIAVLNHQAITKYKAGENETTVVVSDDTCPEKDVKEIKKFCEKLGYVYEGRLSEEYTQTNTGPDDDWITNGFESDDDVDPSIKTIGFNYPHVNRRNKLPDPVEKEKSVSLWSMIKDNIGKDLTKVCLPVYFNEPLSSLQKCFEDLEYSYLLDQASEWGKRGNNLMRILNVAAFAVSGYASTKGRICKPFNPMLGETYEADYPDKGLRFFSEKVSHHPMIVACHCDGTGWKFWGDSNLKSKFWGRSIQLDPIGLLTLQFDDGEIVQWSKVTTSIYNLILGKLYCDHYGTMLIEGNGEYSCKLKFKKQSMMDRNPHQVQGIVEDKNGKTVAKLFGKWDESMYYVMVNQGKESESHLLWKRNKPLENPTKYNLTRFGITLNELTPDLKEMLPPTDSRLRPDQRYLEKGEFEMGNREKLRLEQRQRQAREKQERGWKPTWFSKEKGSETYRYIGGYWEARDSGRWDDCPDIFGQVH.

Belongs to the OSBP family. Expressed at low levels in flowers.

May be involved in the transport of sterols. The polypeptide is Oxysterol-binding protein-related protein 1B (ORP1B) (Arabidopsis thaliana (Mouse-ear cress)).